Here is a 525-residue protein sequence, read N- to C-terminus: BTB/POZ domain-containing protein 2 (525 aa).

The disordered stretch occupies residues 1–86 (MAAGGSGGRA…AEEAAGPGAA (86 aa)). Gly residues predominate over residues 16-26 (VGVGPGTGGSP). Residues 27 to 55 (GPSANAAATPAPGNAAAAAAAAAAAAAAP) are compositionally biased toward low complexity. Positions 56–65 (GPTPPAPPGP) are enriched in pro residues. Residues 66-86 (GTDAQAAGAERAEEAAGPGAA) are compositionally biased toward low complexity. Residues 117 to 187 (CDVHFLVGKG…LYSDEVQIGP (71 aa)) form the BTB domain.

As to quaternary structure, interacts with topoisomerase 1 and with TRIM5 isoform Delta.

The protein resides in the cytoplasm. In Homo sapiens (Human), this protein is BTB/POZ domain-containing protein 2 (BTBD2).